The sequence spans 447 residues: ATP-dependent protease ATPase subunit HslU (447 aa).

Residues Ile-17 and 59 to 64 (GVGKTE) each bind ATP. A disordered region spans residues 136-160 (PPARGGFQGEPTAEEKPTEKKESAT). A compositionally biased stretch (basic and acidic residues) spans 148–159 (AEEKPTEKKESA). Residues Asp-260, Glu-325, and Arg-397 each contribute to the ATP site.

This sequence belongs to the ClpX chaperone family. HslU subfamily. A double ring-shaped homohexamer of HslV is capped on each side by a ring-shaped HslU homohexamer. The assembly of the HslU/HslV complex is dependent on binding of ATP.

Its subcellular location is the cytoplasm. ATPase subunit of a proteasome-like degradation complex; this subunit has chaperone activity. The binding of ATP and its subsequent hydrolysis by HslU are essential for unfolding of protein substrates subsequently hydrolyzed by HslV. HslU recognizes the N-terminal part of its protein substrates and unfolds these before they are guided to HslV for hydrolysis. The protein is ATP-dependent protease ATPase subunit HslU of Coxiella burnetii (strain Dugway 5J108-111).